The primary structure comprises 250 residues: tRNA (guanine-N(1)-)-methyltransferase (250 aa).

Residues G116 and 136 to 141 (IGDYVL) contribute to the S-adenosyl-L-methionine site.

Belongs to the RNA methyltransferase TrmD family. Homodimer.

Its subcellular location is the cytoplasm. It catalyses the reaction guanosine(37) in tRNA + S-adenosyl-L-methionine = N(1)-methylguanosine(37) in tRNA + S-adenosyl-L-homocysteine + H(+). Specifically methylates guanosine-37 in various tRNAs. The chain is tRNA (guanine-N(1)-)-methyltransferase from Pseudomonas syringae pv. tomato (strain ATCC BAA-871 / DC3000).